A 291-amino-acid chain; its full sequence is ATP synthase gamma chain (291 aa).

It belongs to the ATPase gamma chain family. In terms of assembly, F-type ATPases have 2 components, CF(1) - the catalytic core - and CF(0) - the membrane proton channel. CF(1) has five subunits: alpha(3), beta(3), gamma(1), delta(1), epsilon(1). CF(0) has three main subunits: a, b and c.

Its subcellular location is the cell inner membrane. Its function is as follows. Produces ATP from ADP in the presence of a proton gradient across the membrane. The gamma chain is believed to be important in regulating ATPase activity and the flow of protons through the CF(0) complex. This chain is ATP synthase gamma chain, found in Rhodopseudomonas palustris (strain BisB5).